A 316-amino-acid polypeptide reads, in one-letter code: MKPEIQSSLEYYSDLIEHMDDSHIYSLIFQANSIREKYKGKKIELCAIVNAKSGLCSEDCAFCAQSSRYKTNSPVYSLLEKDEIVKKALEAKKYGVKRFSIVISGKKPSKKELEKIGNSIEAIKKIGIYPCASLGLLEYDEICYLRDKGLERLHCNIETSERFFSNICTTHKFSDKVKTLENANKTGLSICSGGVFGIGESWDDRKEMAEFLKNLNVDSIPINFLTPIKGTPLESKKPLNPMEALRIIILFRLILPDKDIRVCGGRPLLGEFASWIFIAGANALMTGNYLTTTGRHYSDDIKFIEAHGLEVDSVVS.

The Radical SAM core domain occupies 38–266 (YKGKKIELCA…DKDIRVCGGR (229 aa)). [4Fe-4S] cluster is bound by residues Cys-56, Cys-60, and Cys-63. [2Fe-2S] cluster contacts are provided by Ser-100, Cys-131, Cys-191, and Arg-261.

The protein belongs to the radical SAM superfamily. Biotin synthase family. Homodimer. [4Fe-4S] cluster serves as cofactor. [2Fe-2S] cluster is required as a cofactor.

It catalyses the reaction (4R,5S)-dethiobiotin + (sulfur carrier)-SH + 2 reduced [2Fe-2S]-[ferredoxin] + 2 S-adenosyl-L-methionine = (sulfur carrier)-H + biotin + 2 5'-deoxyadenosine + 2 L-methionine + 2 oxidized [2Fe-2S]-[ferredoxin]. It functions in the pathway cofactor biosynthesis; biotin biosynthesis; biotin from 7,8-diaminononanoate: step 2/2. Functionally, catalyzes the conversion of dethiobiotin (DTB) to biotin by the insertion of a sulfur atom into dethiobiotin via a radical-based mechanism. This chain is Biotin synthase, found in Thermodesulfovibrio yellowstonii (strain ATCC 51303 / DSM 11347 / YP87).